A 281-amino-acid polypeptide reads, in one-letter code: Nucleotide-binding protein Patl_0571 (281 aa).

8 to 15 serves as a coordination point for ATP; the sequence is GRSGSGKS. 56–59 is a binding site for GTP; sequence DVRN.

The protein belongs to the RapZ-like family.

Functionally, displays ATPase and GTPase activities. This Pseudoalteromonas atlantica (strain T6c / ATCC BAA-1087) protein is Nucleotide-binding protein Patl_0571.